Reading from the N-terminus, the 568-residue chain is Putative ABC transporter ATP-binding protein EF_2153 (568 aa).

2 consecutive ABC transporter domains span residues 6-247 (ITFN…GIRE) and 301-535 (LRLE…ASLK). Residues 40 to 47 (GPSGSGKS) and 335 to 342 (GKNGAGKS) each bind ATP.

This sequence belongs to the ABC transporter superfamily.

The protein resides in the cell membrane. Probably part of an ABC transporter complex. Responsible for energy coupling to the transport system. This chain is Putative ABC transporter ATP-binding protein EF_2153, found in Enterococcus faecalis (strain ATCC 700802 / V583).